Here is a 276-residue protein sequence, read N- to C-terminus: Bifunctional protein FolD 1 (276 aa).

NADP(+)-binding positions include 161–163, S186, and T227; that span reads GRG.

Belongs to the tetrahydrofolate dehydrogenase/cyclohydrolase family. As to quaternary structure, homodimer.

The catalysed reaction is (6R)-5,10-methylene-5,6,7,8-tetrahydrofolate + NADP(+) = (6R)-5,10-methenyltetrahydrofolate + NADPH. It carries out the reaction (6R)-5,10-methenyltetrahydrofolate + H2O = (6R)-10-formyltetrahydrofolate + H(+). Its pathway is one-carbon metabolism; tetrahydrofolate interconversion. Its function is as follows. Catalyzes the oxidation of 5,10-methylenetetrahydrofolate to 5,10-methenyltetrahydrofolate and then the hydrolysis of 5,10-methenyltetrahydrofolate to 10-formyltetrahydrofolate. The polypeptide is Bifunctional protein FolD 1 (Frankia casuarinae (strain DSM 45818 / CECT 9043 / HFP020203 / CcI3)).